Here is a 203-residue protein sequence, read N- to C-terminus: Small ribosomal subunit protein uS4 (203 aa).

Residues 93 to 156 enclose the S4 RNA-binding domain; sequence RRLDNVVYRL…LKVPAILEAV (64 aa).

This sequence belongs to the universal ribosomal protein uS4 family. As to quaternary structure, part of the 30S ribosomal subunit. Contacts protein S5. The interaction surface between S4 and S5 is involved in control of translational fidelity.

One of the primary rRNA binding proteins, it binds directly to 16S rRNA where it nucleates assembly of the body of the 30S subunit. Its function is as follows. With S5 and S12 plays an important role in translational accuracy. The protein is Small ribosomal subunit protein uS4 of Streptococcus pneumoniae serotype 2 (strain D39 / NCTC 7466).